The sequence spans 1103 residues: Trophozoite exported protein 1 (1103 aa).

Residues 173 to 212 (KKEKIEDKKYEQDDEEENEEEEEEEEEEEGEEENKEDEEF) are a coiled coil. Disordered stretches follow at residues 178 to 210 (EDKKYEQDDEEENEEEEEEEEEEEGEEENKEDE) and 271 to 301 (KSYSGDEKINTSDNAKSCSGDEKVITSDNGK). Residues 184 to 210 (QDDEEENEEEEEEEEEEEGEEENKEDE) are compositionally biased toward acidic residues. A compositionally biased stretch (basic and acidic residues) spans 271–280 (KSYSGDEKIN). 2 coiled-coil regions span residues 304-330 (DYVKNESEEQEEKENMLNNKKRSLECN) and 478-518 (YKNY…KLNN). The interval 544-601 (YFDEGENPYNRNNKNYRTDNKNSDDNNNNNNYYYNNYNSDDNYNSEDNEYNNGNYRFR) is disordered. Residues 568 to 585 (DNNNNNNYYYNNYNSDDN) show a composition bias toward low complexity. Coiled-coil stretches lie at residues 650–791 (FRNL…LSGI), 819–932 (DEKY…IYKK), and 993–1030 (NKKLIGHCQDLEKENSTLQNKLSNEIKNSKMLSKNLSK). The segment at 1050-1089 (CSVCMENFRNYIIIKCGHIYCNNCIFNNLKTRNRKCPQCK) adopts an RING-type zinc-finger fold.

The protein localises to the host cell membrane. The sequence is that of Trophozoite exported protein 1 from Plasmodium falciparum (isolate 3D7).